Reading from the N-terminus, the 79-residue chain is Conotoxin Leo-O1 (79 aa).

A signal peptide spans 1–22 (MKLTCMMLVAVLFLTAWTFVTA). Positions 23–51 (NVSRNGLENLFPEERHEMMNPEAAKLNNR) are excised as a propeptide. Intrachain disulfides connect Cys-53–Cys-70, Cys-60–Cys-74, and Cys-69–Cys-78.

It belongs to the conotoxin O1 superfamily. Expressed by the venom duct.

The protein resides in the secreted. The chain is Conotoxin Leo-O1 from Conus leopardus (Leopard cone).